An 870-amino-acid chain; its full sequence is Dynamin-2 (870 aa).

The Dynamin-type G domain maps to 28-294 (HLDLPQIAVV…LTNHIRESLP (267 aa)). Residues 38–45 (GGQSAGKS) are G1 motif. GDP contacts are provided by serine 41, glycine 43, lysine 44, serine 45, serine 46, arginine 59, and glycine 60. The G2 motif stretch occupies residues 64-66 (VTR). Residues 136–139 (DLPG) are G3 motif. The tract at residues 205 to 208 (TKLD) is G4 motif. Lysine 206, aspartate 208, and aspartate 211 together coordinate GDP. Tyrosine 231 bears the Phosphotyrosine mark. The G5 motif stretch occupies residues 235–238 (VNRS). Asparagine 236, arginine 237, and glutamine 239 together coordinate GDP. At lysine 299 the chain carries N6-acetyllysine. Residues 519–625 (LVIRRGWLTI…WKASFLRAGV (107 aa)) form the PH domain. Residue tyrosine 597 is modified to Phosphotyrosine. Lysine 598 carries the post-translational modification N6-acetyllysine. In terms of domain architecture, GED spans 653–744 (VETIRNLVDS…IIGDISTSTV (92 aa)). The interval 741–870 (TSTVSTPVPP…IRPAEPSLLD (130 aa)) is disordered. Threonine 755 bears the Phosphothreonine mark. Residues 756-767 (WLQNTSGHSPTP) are compositionally biased toward polar residues. At serine 764 the chain carries Phosphoserine; by CDK1. Positions 826 to 846 (SAPPQIPSRPARIPPGIPPGV) are enriched in pro residues. A compositionally biased stretch (low complexity) spans 847 to 864 (PSRRAPAAPSRPTIIRPA).

The protein belongs to the TRAFAC class dynamin-like GTPase superfamily. Dynamin/Fzo/YdjA family. As to quaternary structure, oligomerizes into a helical polymer that self-assembles around the vesicle membrane, when associated to the menbrane through lipid binding. Interacts with SHANK1 and SHANK2. Interacts with SNX9. Interacts (via C-terminal proline-rich domain (PRD)) with SNX18 (via SH3 domain); this interaction regulates ATG9A and ATG16L1 trafficking from recycling endosomes to sites of autophagosome formation. Interacts with SNX33 (via SH3 domain). Interacts with MYO1E (via SH3 domain). Interacts with PSTPIP1 (via SH3 domain). Interacts with CTNND2. Interacts (via C-terminal proline-rich domain (PRD)) with BIN1 (via SH3 domain); this interaction allows the recruitment of DNM2 to the membrane tubules and inhibits self-assembly-stimulated GTPase activity on the membrane. Interacts with GABARAP, GABARAPL1 and GABARAPL2. Interacts with MAP1LC3B (the lipidate and non-lipidated LC3 form); this interaction mediates recycling endosome scission leading to autophagosome release. Interacts with ITSN1. Interacts (via C-terminal proline-rich domain (PRD)) with SH3BP4 (via SH3 domain); this interaction controls the GTPase activity and is prevented by EGFR-induced tyrosine phosphorylation of either DNM2 or SH3BP4. Interacts with MYOF. May interact with PIK3C3. May be a component of a complex composed of RAB5A (in GDP-bound form), DYN2 and PIK3C3. Interacts with SDC4; this interaction is markedly enhanced at focal ahesion site upon induction of focal adhesions and stress-fiber formation. Interacts with ACTN1. Interacts with CTTN; this interaction stimulates the intrinsic GTPase activity of DNM2 and stabilizes the association of DNM2 and actin filaments; in addition this interaction is stimulated by ligand binding to the receptor, leading to the recruitment of the DNM2-CTTN complex to the sequestered receptor-ligand complex to its internalization. Interacts with NOSTRIN (via SH3 domain); this interaction allows the recruitment of NOS3 to dynamin-positive structures. Interacts with TUBG1; this interaction may participate in centrosome cohesion. Post-translationally, phosphorylation at Ser-848 by GSK3-alpha relieves the inhibition of BIN1 and promotes endocytosis. Phosphorylation at Ser-764 by CDK1 is greatly increased upon mitotic entry. It regulates cytokinesis downstream of calcineurin, and does not affect clathrin-mediated endocytosis. Dephosphorylated by calcineurin/PP2 during cytokinesis in a Ca(2+)- and calmodulin-dependent manner. Phosphorylated on tyrosine residues by EGFR. Phosphorylated on tyrosine residues after activation of SRC. Expressed in most tissues during embryonic development, including the peripheral nervous system although no expression is evident in skeletal muscle or heart.

Its subcellular location is the cytoplasm. The protein resides in the cytoskeleton. The protein localises to the cytoplasmic vesicle. It is found in the clathrin-coated vesicle. It localises to the cell projection. Its subcellular location is the uropodium. The protein resides in the endosome. The protein localises to the microtubule organizing center. It is found in the centrosome. It localises to the centriole. Its subcellular location is the recycling endosome. The protein resides in the phagocytic cup. The protein localises to the phagosome membrane. It is found in the podosome. It localises to the cell junction. Its subcellular location is the postsynaptic density. The protein resides in the synapse. The protein localises to the synaptosome. It is found in the midbody. It localises to the membrane. Its subcellular location is the clathrin-coated pit. The enzyme catalyses GTP + H2O = GDP + phosphate + H(+). In terms of biological role, catalyzes the hydrolysis of GTP and utilizes this energy to mediate vesicle scission at plasma membrane during endocytosis and filament remodeling at many actin structures during organization of the actin cytoskeleton. Plays an important role in vesicular trafficking processes, namely clathrin-mediated endocytosis (CME), exocytic and clathrin-coated vesicle from the trans-Golgi network, and PDGF stimulated macropinocytosis. During vesicular trafficking process, associates to the membrane, through lipid binding, and self-assembles into ring-like structure through oligomerization to form a helical polymer around the vesicle membrane and leading to vesicle scission. Plays a role in organization of the actin cytoskeleton by mediating arrangement of stress fibers and actin bundles in podocytes. During organization of the actin cytoskeleton, self-assembles into ring-like structure that directly bundles actin filaments to form typical membrane tubules decorated with dynamin spiral polymers. Self-assembly increases GTPase activity and the GTP hydrolysis causes the rapid depolymerization of dynamin spiral polymers, and results in dispersion of actin bundles. Remodels, through its interaction with CTTN, bundled actin filaments in a GTPase-dependent manner and plays a role in orchestrating the global actomyosin cytoskeleton. The interaction with CTTN stabilizes the interaction of DNM2 and actin filaments and stimulates the intrinsic GTPase activity that results in actin filament-barbed ends and increases the sensitivity of filaments in bundles to the actin depolymerizing factor, CFL1. Plays a role in the autophagy process, by participating in the formation of ATG9A vesicles destined for the autophagosomes through its interaction with SNX18, by mediating recycling endosome scission leading to autophagosome release through MAP1LC3B interaction. Also regulates maturation of apoptotic cell corpse-containing phagosomes by recruiting PIK3C3 to the phagosome membrane. Also plays a role in cytokinesis. May participate in centrosome cohesion through its interaction with TUBG1. Plays a role in the regulation of neuron morphology, axon growth and formation of neuronal growth cones. Involved in membrane tubulation. The sequence is that of Dynamin-2 from Mus musculus (Mouse).